The following is a 291-amino-acid chain: 33 kDa chaperonin (291 aa).

2 cysteine pairs are disulfide-bonded: C235–C237 and C268–C271.

The protein belongs to the HSP33 family. Under oxidizing conditions two disulfide bonds are formed involving the reactive cysteines. Under reducing conditions zinc is bound to the reactive cysteines and the protein is inactive.

The protein resides in the cytoplasm. Functionally, redox regulated molecular chaperone. Protects both thermally unfolding and oxidatively damaged proteins from irreversible aggregation. Plays an important role in the bacterial defense system toward oxidative stress. The protein is 33 kDa chaperonin of Streptococcus agalactiae serotype III (strain NEM316).